Consider the following 87-residue polypeptide: HssA/B-like protein 55 (87 aa).

A compositionally biased stretch (polar residues) spans 1 to 13 (MTILSAITSISRP). Residues 1–31 (MTILSAITSISRPNKSSKSVVSSNGGSSLSM) form a disordered region. A compositionally biased stretch (low complexity) spans 14–31 (NKSSKSVVSSNGGSSLSM).

The protein belongs to the hssA/B family.

This Dictyostelium discoideum (Social amoeba) protein is HssA/B-like protein 55 (hssl55).